A 370-amino-acid polypeptide reads, in one-letter code: Anhydro-N-acetylmuramic acid kinase (370 aa).

Position 13 to 20 (13 to 20) interacts with ATP; that stretch reads GTSLDGVD.

The protein belongs to the anhydro-N-acetylmuramic acid kinase family.

The catalysed reaction is 1,6-anhydro-N-acetyl-beta-muramate + ATP + H2O = N-acetyl-D-muramate 6-phosphate + ADP + H(+). The protein operates within amino-sugar metabolism; 1,6-anhydro-N-acetylmuramate degradation. Its pathway is cell wall biogenesis; peptidoglycan recycling. In terms of biological role, catalyzes the specific phosphorylation of 1,6-anhydro-N-acetylmuramic acid (anhMurNAc) with the simultaneous cleavage of the 1,6-anhydro ring, generating MurNAc-6-P. Is required for the utilization of anhMurNAc either imported from the medium or derived from its own cell wall murein, and thus plays a role in cell wall recycling. The polypeptide is Anhydro-N-acetylmuramic acid kinase (Vibrio cholerae serotype O1 (strain ATCC 39315 / El Tor Inaba N16961)).